The chain runs to 431 residues: Trigger factor (431 aa).

Residues 165-250 form the PPIase FKBP-type domain; the sequence is TDTAVFDFEG…LHQIKTKKIP (86 aa).

This sequence belongs to the FKBP-type PPIase family. Tig subfamily.

It is found in the cytoplasm. It carries out the reaction [protein]-peptidylproline (omega=180) = [protein]-peptidylproline (omega=0). Involved in protein export. Acts as a chaperone by maintaining the newly synthesized protein in an open conformation. Functions as a peptidyl-prolyl cis-trans isomerase. The polypeptide is Trigger factor (Aster yellows witches'-broom phytoplasma (strain AYWB)).